Here is a 562-residue protein sequence, read N- to C-terminus: Scaffold protein FimL (562 aa).

As to quaternary structure, interacts with PilG and FimV.

Its subcellular location is the cytoplasm. Regulates multiple virulence functions including type IV pilus (T4P)-mediated assembly and twitching motility as well as cAMP-dependent virulence gene expression. Regulates intracellular cyclic AMP (cAMP) levels through the activation of adenylate cyclase CyaB. Also functions as a scaffold linking FimV and PilG at the pole, where type IV pilus (T4P), the Chp chemosensory system and the CyaB adenylate cyclase interact. This chain is Scaffold protein FimL (fimL), found in Pseudomonas aeruginosa (strain ATCC 15692 / DSM 22644 / CIP 104116 / JCM 14847 / LMG 12228 / 1C / PRS 101 / PAO1).